The following is a 226-amino-acid chain: MIERIKKFLRTKFKPLLLLLVTVILYNGWTPHLGIFPPTFYDFAFNYYGFVDILTFLVIIVIAYKNDAFKKIFDIFRPKNLLFILFFIVGGNIFIALAHHLYFQMTPALEAFPEHSIDLANYFARTPFWTHSLDLFVIGPISEELIYREYLYRLFDKKCLACFVSVTMFAWVHTGFTYSFFLYLPISLVVTLAYHRRKAIGESIALHSSINLINTYLPNLLSFWVF.

Transmembrane regions (helical) follow at residues 16–36 (LLLL…LGIF), 43–63 (FAFN…IVIA), 81–101 (LLFI…AHHL), 169–189 (FAWV…ISLV), and 206–226 (LHSS…FWVF).

Belongs to the UPF0177 family.

It localises to the cell membrane. The sequence is that of UPF0177 protein YbdJ (ybdJ) from Lactococcus lactis subsp. lactis (strain IL1403) (Streptococcus lactis).